The following is a 173-amino-acid chain: Lipoprotein signal peptidase (173 aa).

4 consecutive transmembrane segments (helical) span residues Phe-7–Val-27, Leu-41–Phe-61, Trp-70–Asn-90, and Ala-95–Gly-115. Catalysis depends on residues Asp-119 and Asp-135. A helical membrane pass occupies residues Ile-130–Trp-150.

It belongs to the peptidase A8 family.

It is found in the cell inner membrane. It catalyses the reaction Release of signal peptides from bacterial membrane prolipoproteins. Hydrolyzes -Xaa-Yaa-Zaa-|-(S,diacylglyceryl)Cys-, in which Xaa is hydrophobic (preferably Leu), and Yaa (Ala or Ser) and Zaa (Gly or Ala) have small, neutral side chains.. Its pathway is protein modification; lipoprotein biosynthesis (signal peptide cleavage). Its function is as follows. This protein specifically catalyzes the removal of signal peptides from prolipoproteins. The protein is Lipoprotein signal peptidase of Cyanothece sp. (strain PCC 7425 / ATCC 29141).